The sequence spans 155 residues: SsrA-binding protein (155 aa).

The protein belongs to the SmpB family.

It localises to the cytoplasm. Its function is as follows. Required for rescue of stalled ribosomes mediated by trans-translation. Binds to transfer-messenger RNA (tmRNA), required for stable association of tmRNA with ribosomes. tmRNA and SmpB together mimic tRNA shape, replacing the anticodon stem-loop with SmpB. tmRNA is encoded by the ssrA gene; the 2 termini fold to resemble tRNA(Ala) and it encodes a 'tag peptide', a short internal open reading frame. During trans-translation Ala-aminoacylated tmRNA acts like a tRNA, entering the A-site of stalled ribosomes, displacing the stalled mRNA. The ribosome then switches to translate the ORF on the tmRNA; the nascent peptide is terminated with the 'tag peptide' encoded by the tmRNA and targeted for degradation. The ribosome is freed to recommence translation, which seems to be the essential function of trans-translation. This is SsrA-binding protein from Alkaliphilus oremlandii (strain OhILAs) (Clostridium oremlandii (strain OhILAs)).